The following is a 168-amino-acid chain: MPLLDSFKVDHTKMQAPAVRIAKTMTTPKGDLITVFDLRFCVPNKEIMSPKGIHTLEHLFAGFMRAHLNSDEVEIIDISPMGCRTGFYMSLIGAPSERRVADAWLAAMHDILNVQDQSKIPELNIYQCGTYTEHSLSDAHATAQHVITRGIGINKNEELLLDESLLTE.

The Fe cation site is built by H54, H58, and C128.

This sequence belongs to the LuxS family. In terms of assembly, homodimer. Requires Fe cation as cofactor.

It carries out the reaction S-(5-deoxy-D-ribos-5-yl)-L-homocysteine = (S)-4,5-dihydroxypentane-2,3-dione + L-homocysteine. Functionally, involved in the synthesis of autoinducer 2 (AI-2) which is secreted by bacteria and is used to communicate both the cell density and the metabolic potential of the environment. The regulation of gene expression in response to changes in cell density is called quorum sensing. Catalyzes the transformation of S-ribosylhomocysteine (RHC) to homocysteine (HC) and 4,5-dihydroxy-2,3-pentadione (DPD). In Actinobacillus succinogenes (strain ATCC 55618 / DSM 22257 / CCUG 43843 / 130Z), this protein is S-ribosylhomocysteine lyase.